A 285-amino-acid chain; its full sequence is HTH-type transcriptional regulator YofA (285 aa).

The HTH lysR-type domain occupies 1–58 (MESGDLKIFQAVAREGSITKAAQMLNYVQSNVTARVHNLEEDLNIRLFHRTNRGMKLT). Residues 18–37 (ITKAAQMLNYVQSNVTARVH) constitute a DNA-binding region (H-T-H motif).

This sequence belongs to the LysR transcriptional regulatory family.

Its subcellular location is the cytoplasm. In terms of biological role, regulates expression of the cell division protein ftsW, and is essential for cell viability during stationary phase. The sequence is that of HTH-type transcriptional regulator YofA (yofA) from Bacillus subtilis (strain 168).